Here is a 586-residue protein sequence, read N- to C-terminus: YTH domain-containing family protein 2 (586 aa).

Disordered regions lie at residues 98 to 128 (LKEK…QPVQ), 141 to 181 (SQDQ…KESP), and 301 to 464 (QGLA…PLVS). Polar residues-rich tracts occupy residues 107–128 (ALRQ…QPVQ), 169–181 (TLPT…KESP), and 352–368 (SSQA…TDIQ). Basic residues predominate over residues 398–418 (CARRHRSSSPRGRSGSHKSRR). A compositionally biased stretch (polar residues) spans 421-436 (TDSPVSRSTTKSTPSR). The YTH domain occupies 435-576 (SRARQPGHRD…YCGRDLLRLM (142 aa)). Basic and acidic residues predominate over residues 441–458 (GHRDYREYRDDRNRDTKP).

Belongs to the YTHDF family. YTHDF1 subfamily.

In terms of biological role, specifically recognizes and binds N6-methyladenosine (m6A)-containing mRNAs, and regulates their stability. M6A is a modification present at internal sites of mRNAs and some non-coding RNAs and plays a role in mRNA stability and processing. Plays a role in pathogenicity towards plant host. The sequence is that of YTH domain-containing family protein 2 from Pyricularia oryzae (strain 70-15 / ATCC MYA-4617 / FGSC 8958) (Rice blast fungus).